We begin with the raw amino-acid sequence, 281 residues long: tRNA N(3)-cytidine methyltransferase METTL8, mitochondrial (281 aa).

The transit peptide at Met-1–Gln-22 directs the protein to the mitochondrion. A Glycyl lysine isopeptide (Lys-Gly) (interchain with G-Cter in SUMO) cross-link involves residue Lys-80. S-adenosyl-L-methionine contacts are provided by Trp-89 and Tyr-93. Residues Arg-139–Phe-151 are compositionally biased toward polar residues. Residues Arg-139–Pro-180 are disordered. Positions 194, 220, and 246 each coordinate S-adenosyl-L-methionine.

It belongs to the methyltransferase superfamily. METL family. Interacts with EP300. In terms of tissue distribution, absent in embryonic lung but is induced in a fibroblast cell line by stretch. Expressed in undifferentiated progenitor cells, while its expression is inhibited by stretch. As to expression, absent in undifferentiated embryonic lung mesenchymal cells, but expression is induced by stretch. In terms of tissue distribution, expressed in mature adipose tissue.

It is found in the mitochondrion. The protein localises to the cytoplasm. Its subcellular location is the nucleus. The enzyme catalyses cytidine(32) in tRNA(Ser) + S-adenosyl-L-methionine = N(3)-methylcytidine(32) in tRNA(Ser) + S-adenosyl-L-homocysteine + H(+). It carries out the reaction cytidine(32) in tRNA(Thr) + S-adenosyl-L-methionine = N(3)-methylcytidine(32) in tRNA(Thr) + S-adenosyl-L-homocysteine + H(+). It catalyses the reaction a cytidine in mRNA + S-adenosyl-L-methionine = an N(3)-methylcytidine in mRNA + S-adenosyl-L-homocysteine + H(+). Mitochondrial S-adenosyl-L-methionine-dependent methyltransferase that mediates N(3)-methylcytidine modification of residue 32 of the tRNA anticodon loop of mitochondrial tRNA(Ser)(UCN) and tRNA(Thr). N(3)-methylcytidine methylation modification regulates mitochondrial translation efficiency and is required for activity of the respiratory chain. N(3)-methylcytidine methylation of mitochondrial tRNA(Ser)(UCN) requires the formation of N(6)-dimethylallyladenosine(37) (i6A37) by TRIT1 as prerequisite. May also mediate N(3)-methylcytidine modification of mRNAs. The existence of N(3)-methylcytidine modification on mRNAs is however unclear, and additional evidences are required to confirm the role of the N(3)-methylcytidine-specific mRNA methyltransferase activity of METTL8 in vivo. In terms of biological role, overexpression in lung progenitor cells stimulates smooth muscle-specific gene expression and suppresses adipogenic gene expression. Functionally, stimulates adipogenesis. This Mus musculus (Mouse) protein is tRNA N(3)-cytidine methyltransferase METTL8, mitochondrial.